A 126-amino-acid polypeptide reads, in one-letter code: Small ribosomal subunit protein uS12m (126 aa).

Disordered regions lie at residues 1–27 (MPTM…LNKC) and 106–126 (GIPG…KDYI). Basic residues-rich tracts occupy residues 12–23 (RESKRRTKRTRA) and 109–120 (GRRRGRSKYGTK).

It belongs to the universal ribosomal protein uS12 family.

It localises to the mitochondrion. Protein S12 is involved in the translation initiation step. The chain is Small ribosomal subunit protein uS12m (RPS12) from Marchantia polymorpha (Common liverwort).